A 397-amino-acid chain; its full sequence is Elongation factor Tu 2 (397 aa).

In terms of domain architecture, tr-type G spans 10–206; it reads KPHVNIGTIG…AIDTWIPEPV (197 aa). A G1 region spans residues 19–26; it reads GHVDHGKT. A GTP-binding site is contributed by 19–26; sequence GHVDHGKT. T26 contacts Mg(2+). The G2 stretch occupies residues 61–65; it reads GITIS. The tract at residues 82–85 is G3; the sequence is DCPG. GTP-binding positions include 82-86 and 137-140; these read DCPGH and NKCD. The G4 stretch occupies residues 137 to 140; that stretch reads NKCD. The interval 175–177 is G5; that stretch reads SAL.

Belongs to the TRAFAC class translation factor GTPase superfamily. Classic translation factor GTPase family. EF-Tu/EF-1A subfamily. Monomer.

The protein localises to the cytoplasm. It catalyses the reaction GTP + H2O = GDP + phosphate + H(+). GTP hydrolase that promotes the GTP-dependent binding of aminoacyl-tRNA to the A-site of ribosomes during protein biosynthesis. The sequence is that of Elongation factor Tu 2 from Alkaliphilus metalliredigens (strain QYMF).